The sequence spans 400 residues: Enoyl-[acyl-carrier-protein] reductase [NADH] (400 aa).

Residues 48–53 (GSSSGY), 74–75 (FE), 111–112 (DA), and 139–140 (LA) each bind NAD(+). Tyr225 serves as a coordination point for substrate. Tyr235 acts as the Proton donor in catalysis. NAD(+) contacts are provided by residues Lys244 and 273–275 (VVT).

It belongs to the TER reductase family. Monomer.

The enzyme catalyses a 2,3-saturated acyl-[ACP] + NAD(+) = a (2E)-enoyl-[ACP] + NADH + H(+). It functions in the pathway lipid metabolism; fatty acid biosynthesis. In terms of biological role, involved in the final reduction of the elongation cycle of fatty acid synthesis (FAS II). Catalyzes the reduction of a carbon-carbon double bond in an enoyl moiety that is covalently linked to an acyl carrier protein (ACP). The polypeptide is Enoyl-[acyl-carrier-protein] reductase [NADH] (Shewanella woodyi (strain ATCC 51908 / MS32)).